A 630-amino-acid chain; its full sequence is 1,4-alpha-glucan branching enzyme GlgB (630 aa).

Catalysis depends on Asp308, which acts as the Nucleophile. Catalysis depends on Glu361, which acts as the Proton donor.

This sequence belongs to the glycosyl hydrolase 13 family. GlgB subfamily. Monomer.

The enzyme catalyses Transfers a segment of a (1-&gt;4)-alpha-D-glucan chain to a primary hydroxy group in a similar glucan chain.. It functions in the pathway glycan biosynthesis; glycogen biosynthesis. Catalyzes the formation of the alpha-1,6-glucosidic linkages in glycogen by scission of a 1,4-alpha-linked oligosaccharide from growing alpha-1,4-glucan chains and the subsequent attachment of the oligosaccharide to the alpha-1,6 position. This is 1,4-alpha-glucan branching enzyme GlgB from Halothermothrix orenii (strain H 168 / OCM 544 / DSM 9562).